Consider the following 203-residue polypeptide: Peptide deformylase (203 aa).

Fe cation is bound by residues cysteine 121 and histidine 163. The active site involves glutamate 164. Histidine 167 is a Fe cation binding site.

Belongs to the polypeptide deformylase family. The cofactor is Fe(2+).

The enzyme catalyses N-terminal N-formyl-L-methionyl-[peptide] + H2O = N-terminal L-methionyl-[peptide] + formate. Functionally, removes the formyl group from the N-terminal Met of newly synthesized proteins. Requires at least a dipeptide for an efficient rate of reaction. N-terminal L-methionine is a prerequisite for activity but the enzyme has broad specificity at other positions. The polypeptide is Peptide deformylase (Prochlorococcus marinus (strain SARG / CCMP1375 / SS120)).